The primary structure comprises 294 residues: MLELLLQPFNYNYMVKAIWVSAIVGAVCAFLSAYLMLKGWSLMGDALSHSVVPGVAGAYALGFPYAAGAFFTGMLAALAMTLVRHITRLREDAIIGFIFSTFFAVGLLIVSLNPTSVNVQSIIFGNILGIADEDVLQVEIIILVSFVILCLIWKDLLAVFFDESHAMSIGLSPLRLKILFFTLLSACTVAALQTVGAILVIAMVVTPGATAYLLTDRFGRLLIIAIAIGAITSAFGAYLSFYLDGATGGVIVTLQTLVFLPAFFFAPKHGLLATRYRTRLKRRHPPVHLPEDNL.

Helical transmembrane passes span 17 to 37 (AIWV…YLML), 51 to 71 (VVPG…GAFF), 93 to 113 (AIIG…VSLN), 140 to 160 (IIIL…LAVF), 169 to 189 (IGLS…ACTV), 194 to 214 (TVGA…AYLL), 221 to 241 (LLII…YLSF), and 246 to 266 (ATGG…FFFA).

It belongs to the ABC-3 integral membrane protein family.

It is found in the cell inner membrane. Functionally, part of an ATP-driven transport system YfeABC for chelated iron. In Yersinia pestis, this protein is Chelated iron transport system membrane protein YfeC (yfeC).